The chain runs to 117 residues: Large ribosomal subunit protein bL20c (117 aa).

The protein belongs to the bacterial ribosomal protein bL20 family.

The protein localises to the plastid. It is found in the chloroplast. Its function is as follows. Binds directly to 23S ribosomal RNA and is necessary for the in vitro assembly process of the 50S ribosomal subunit. It is not involved in the protein synthesizing functions of that subunit. The protein is Large ribosomal subunit protein bL20c of Morus indica (Mulberry).